Here is a 238-residue protein sequence, read N- to C-terminus: 2,3,4,5-tetrahydropyridine-2,6-dicarboxylate N-acetyltransferase (238 aa).

It belongs to the transferase hexapeptide repeat family. DapH subfamily.

The catalysed reaction is (S)-2,3,4,5-tetrahydrodipicolinate + acetyl-CoA + H2O = L-2-acetamido-6-oxoheptanedioate + CoA. It functions in the pathway amino-acid biosynthesis; L-lysine biosynthesis via DAP pathway; LL-2,6-diaminopimelate from (S)-tetrahydrodipicolinate (acetylase route): step 1/3. Functionally, catalyzes the transfer of an acetyl group from acetyl-CoA to tetrahydrodipicolinate. This is 2,3,4,5-tetrahydropyridine-2,6-dicarboxylate N-acetyltransferase from Pseudothermotoga lettingae (strain ATCC BAA-301 / DSM 14385 / NBRC 107922 / TMO) (Thermotoga lettingae).